A 272-amino-acid chain; its full sequence is Tryptophan synthase alpha chain (272 aa).

Catalysis depends on proton acceptor residues Glu-49 and Asp-60.

It belongs to the TrpA family. In terms of assembly, tetramer of two alpha and two beta chains.

It catalyses the reaction (1S,2R)-1-C-(indol-3-yl)glycerol 3-phosphate + L-serine = D-glyceraldehyde 3-phosphate + L-tryptophan + H2O. The protein operates within amino-acid biosynthesis; L-tryptophan biosynthesis; L-tryptophan from chorismate: step 5/5. Functionally, the alpha subunit is responsible for the aldol cleavage of indoleglycerol phosphate to indole and glyceraldehyde 3-phosphate. This chain is Tryptophan synthase alpha chain, found in Acidithiobacillus ferrooxidans (strain ATCC 23270 / DSM 14882 / CIP 104768 / NCIMB 8455) (Ferrobacillus ferrooxidans (strain ATCC 23270)).